Here is a 502-residue protein sequence, read N- to C-terminus: Membrane protein insertase YidC (502 aa).

The next 6 helical transmembrane spans lie at 12 to 32, 286 to 306, 312 to 332, 382 to 402, 409 to 429, and 452 to 472; these read FLIF…FYIY, LDWG…YWIY, WVLS…PLGY, LPIL…IITV, FLWI…VIMG, and ITSV…VLYW.

This sequence belongs to the OXA1/ALB3/YidC family. Type 1 subfamily. Interacts with the Sec translocase complex via SecD. Specifically interacts with transmembrane segments of nascent integral membrane proteins during membrane integration.

It localises to the cell membrane. Required for the insertion and/or proper folding and/or complex formation of integral membrane proteins into the membrane. Involved in integration of membrane proteins that insert both dependently and independently of the Sec translocase complex, as well as at least some lipoproteins. Aids folding of multispanning membrane proteins. This chain is Membrane protein insertase YidC, found in Aquifex aeolicus (strain VF5).